The chain runs to 681 residues: MNDTDLSTFTGRSLLIDQLSSVTQGTPVLDFIDKLRIHFYTTIRQNLLKIDLKNICSLHDLTDQLSDFWLVYEQSVLESPILSPELDRILTCFRCLCRRYLPISVIESVLTEYLDQVLKVWLESKTNPCLDMEKFFQLCEKFKQLGLSSVLKERFVYVLQLHVGSLLTTRYAMSWEQSVYHEALEWIRTEFGVLVEHVFSLSNPAVLVQLDHLVSQILAHLRSDNILDIVLHYPNSLGAIEDLRLVARQKQQRQYLTETFVKDCTSSILTASSDSSYILLFYVSTIRCFVALDPPGVLLDKAAKPIRSFLNEREDAYKCLVSLLFVDGEKGLRSELSQIPTENIDSTTDRFDNYHWMPDPIDAAPDFKKPTDRDVVGSLISIFKSKEPLVKELQLLLADRLLQLTDYHYEVEAKNIEFLKYRFGETVLQMCSVMLNDIENSRFIDQSIHMENYVSKGLHVTILSRLFWPTLSVRYFHLPGPLKKELDAYAEEYRERKRKRELVFLPNLGSVELEIELEDRTLTLTVTPEQAAFISLFEETSTLHIEKAAELLDQPKEIVERHLKFWLHHRVLTDIGDDRYRVRETEAETATETVLDEIQGVSAVQSEAESSAAEMRVYWSFVVGMLTNLGALELERIHNMLTMFIPPPNGYTRTQSELREFLALMIKEEKLEFTGGAYKLK.

Belongs to the cullin family. As to quaternary structure, the APC/C is composed of at least 13 subunits: apc1, apc2, nuc2, apc4, apc5, cut9, apc8, apc10, apc11, hcn1, apc13, apc14 and apc15.

Component of the anaphase-promoting complex/cyclosome (APC/C), a cell cycle-regulated E3 ubiquitin-protein ligase complex that controls progression through mitosis and the G1 phase of the cell cycle. The APC/C is thought to confer substrate specificity and, in the presence of ubiquitin-conjugating E2 enzymes, it catalyzes the formation of protein-ubiquitin conjugates that are subsequently degraded by the 26S proteasome. This chain is Anaphase-promoting complex subunit 2 (apc2), found in Schizosaccharomyces pombe (strain 972 / ATCC 24843) (Fission yeast).